Here is a 148-residue protein sequence, read N- to C-terminus: MTITQVKIKKLENFSGSLPEYATEHSAGMDLIAANEQPITIKAAAIQLIPTGIAIALPDSFEAQIRPRSGLAVKHGITVANSPGTIDADYRGEIKVILINLGKEDFIIEKGMRIAQMIIAKYERILWEESISLMETMRGSGGFGSTGV.

Substrate-binding positions include Arg68–Gly70, Asn81, Thr85–Asp87, and Lys95.

It belongs to the dUTPase family. Mg(2+) serves as cofactor.

The enzyme catalyses dUTP + H2O = dUMP + diphosphate + H(+). It functions in the pathway pyrimidine metabolism; dUMP biosynthesis; dUMP from dCTP (dUTP route): step 2/2. This enzyme is involved in nucleotide metabolism: it produces dUMP, the immediate precursor of thymidine nucleotides and it decreases the intracellular concentration of dUTP so that uracil cannot be incorporated into DNA. The polypeptide is Deoxyuridine 5'-triphosphate nucleotidohydrolase (Rickettsia rickettsii (strain Iowa)).